The sequence spans 246 residues: UDP-N-acetyl-D-mannosaminuronic acid transferase (246 aa).

Belongs to the glycosyltransferase 26 family.

It catalyses the reaction UDP-N-acetyl-alpha-D-mannosaminouronate + N-acetyl-alpha-D-glucosaminyl-di-trans,octa-cis-undecaprenyl diphosphate = beta-D-ManNAcA-(1-&gt;4)-alpha-D-GlcNAc-di-trans,octa-cis-undecaprenyl diphosphate + UDP + H(+). The protein operates within bacterial outer membrane biogenesis; enterobacterial common antigen biosynthesis. In terms of biological role, catalyzes the synthesis of Und-PP-GlcNAc-ManNAcA (Lipid II), the second lipid-linked intermediate involved in enterobacterial common antigen (ECA) synthesis. In Serratia proteamaculans (strain 568), this protein is UDP-N-acetyl-D-mannosaminuronic acid transferase.